Reading from the N-terminus, the 293-residue chain is Transcriptional regulator ICP22 homolog (293 aa).

2 disordered regions span residues 1 to 49 and 175 to 293; these read MPHG…QRID and RFLE…SARR. Over residues 21-31 the composition is skewed to low complexity; sequence TPSTSPLIPSL. Residues 190–210 are compositionally biased toward acidic residues; sequence EECDVSGDESPSEEEEEDEAS. A compositionally biased stretch (basic residues) spans 272 to 281; the sequence is AAKKRRKRQP. A compositionally biased stretch (basic and acidic residues) spans 282-293; that stretch reads PKGERPTKSARR.

This sequence belongs to the herpesviridae ICP22 family.

This is Transcriptional regulator ICP22 homolog (IR4) from Equus caballus (Horse).